The primary structure comprises 534 residues: CD276 antigen (534 aa).

The N-terminal stretch at Met1–Ala28 is a signal peptide. The Ig-like V-type 1 domain occupies Leu29–Ala139. Residues Leu29–Ala466 are Extracellular-facing. Cystine bridges form between Cys50–Cys122, Cys165–Cys220, Cys268–Cys340, and Cys383–Cys438. 6 N-linked (GlcNAc...) asparagine glycosylation sites follow: Asn104, Asn189, Asn215, Asn322, Asn407, and Asn433. The 94-residue stretch at Pro145 to Thr238 folds into the Ig-like C2-type 1 domain. An Ig-like V-type 2 domain is found at Pro243 to Ala357. Residues Pro363–Thr456 enclose the Ig-like C2-type 2 domain. A helical transmembrane segment spans residues Leu467–Val487. The Cytoplasmic segment spans residues Cys488–Ala534. Positions Glu498–Gly510 are enriched in acidic residues. The tract at residues Glu498–Ala534 is disordered. Ser525 carries the post-translational modification Phosphoserine.

Belongs to the immunoglobulin superfamily. BTN/MOG family. In terms of assembly, interacts with TREML2 and this interaction enhances T-cell activation. In terms of tissue distribution, ubiquitous but not detectable in peripheral blood lymphocytes or granulocytes. Weakly expressed in resting monocytes. Expressed in dendritic cells derived from monocytes. Expressed in epithelial cells of sinonasal tissue. Expressed in extravillous trophoblast cells and Hofbauer cells of the first trimester placenta and term placenta.

Its subcellular location is the membrane. May participate in the regulation of T-cell-mediated immune response. May play a protective role in tumor cells by inhibiting natural-killer mediated cell lysis as well as a role of marker for detection of neuroblastoma cells. May be involved in the development of acute and chronic transplant rejection and in the regulation of lymphocytic activity at mucosal surfaces. Could also play a key role in providing the placenta and fetus with a suitable immunological environment throughout pregnancy. Both isoform 1 and isoform 2 appear to be redundant in their ability to modulate CD4 T-cell responses. Isoform 2 is shown to enhance the induction of cytotoxic T-cells and selectively stimulates interferon gamma production in the presence of T-cell receptor signaling. The chain is CD276 antigen (CD276) from Homo sapiens (Human).